The chain runs to 322 residues: Transmembrane and ubiquitin-like domain-containing protein 2 (322 aa).

The helical transmembrane segment at 38–58 (VVAGVVVLILALVLAWLSTYV) threads the bilayer. The disordered stretch occupies residues 88-168 (VAGQGTPEPT…VRSEDSTCLP (81 aa)). A compositionally biased stretch (gly residues) spans 115 to 130 (EGGGDPTGEPGAGGGV). Positions 174 to 247 (ISVRLKFFND…IHCHRSPPGS (74 aa)) constitute a Ubiquitin-like domain. Transmembrane regions (helical) follow at residues 267 to 287 (LGVSVGSLMVPVFVVLLGVVW) and 296 to 316 (FFTAPATVSLVGVTVFFSFLV).

It is found in the membrane. The polypeptide is Transmembrane and ubiquitin-like domain-containing protein 2 (TMUB2) (Bos taurus (Bovine)).